A 374-amino-acid polypeptide reads, in one-letter code: MNLQHTPLHDLCRDAGGRMVPFAGWDMPVQFSGLLQEHQAVRQQVGMFDISHMGVLRLEGTNPKDHLQALVPTDLNRIGPGEACYTVLLNETGGILDDLVIYDLGTNKQDSQSLLIVINAACSKTDTIWLKQHLQPAGIALSDAKNNGVLLALQGPQATKVLERLSGESLASLPRFGHRQVQFYGLGAKDPSSVFVARTGYTGEDGFELLLKAEAGRALWLKLLAEGVIPCGLGSRDTLRLEAAMHLYGQDMDINTTPFEAGLGWLVHLEMPAPFMGRTALEQQAEQGPIRRLVGLKLSGRAIARHGYPLLHNNNKVGEITSGTWSPSLEEAIALGYLPTALARIGNEVEVEIRGKHHRATVVKRPFYRRPSLS.

The protein belongs to the GcvT family. As to quaternary structure, the glycine cleavage system is composed of four proteins: P, T, L and H.

It catalyses the reaction N(6)-[(R)-S(8)-aminomethyldihydrolipoyl]-L-lysyl-[protein] + (6S)-5,6,7,8-tetrahydrofolate = N(6)-[(R)-dihydrolipoyl]-L-lysyl-[protein] + (6R)-5,10-methylene-5,6,7,8-tetrahydrofolate + NH4(+). Its function is as follows. The glycine cleavage system catalyzes the degradation of glycine. The polypeptide is Aminomethyltransferase (Prochlorococcus marinus (strain MIT 9313)).